The chain runs to 293 residues: ATP synthase gamma chain (293 aa).

This sequence belongs to the ATPase gamma chain family. As to quaternary structure, F-type ATPases have 2 components, CF(1) - the catalytic core - and CF(0) - the membrane proton channel. CF(1) has five subunits: alpha(3), beta(3), gamma(1), delta(1), epsilon(1). CF(0) has three main subunits: a, b and c.

The protein localises to the cell inner membrane. Its function is as follows. Produces ATP from ADP in the presence of a proton gradient across the membrane. The gamma chain is believed to be important in regulating ATPase activity and the flow of protons through the CF(0) complex. This chain is ATP synthase gamma chain, found in Gluconacetobacter diazotrophicus (strain ATCC 49037 / DSM 5601 / CCUG 37298 / CIP 103539 / LMG 7603 / PAl5).